The primary structure comprises 546 residues: Tyrosine-protein kinase yes (546 aa).

Basic and acidic residues predominate over residues 1-18 (MGCVKSKEDKGPTQKYRP). The segment at 1-58 (MGCVKSKEDKGPTQKYRPDPTNPTPGSHMGLYGPDPTQMGQSPALKGPTNNYNSRSSG) is disordered. Glycine 2 is lipidated: N-myristoyl glycine. Cysteine 3 carries the S-palmitoyl cysteine; in membrane form lipid modification. The span at 48–58 (PTNNYNSRSSG) shows a compositional bias: polar residues. The SH3 domain occupies 94 to 155 (GGVTFFVALY…PSNYVAPADS (62 aa)). Residues 161–258 (WYFGKMGRKD…GLCYRLTTVC (98 aa)) enclose the SH2 domain. In terms of domain architecture, Protein kinase spans 280–533 (LRLELKLGQG…YIQSFLEDYF (254 aa)). ATP contacts are provided by residues 286–294 (LGQGCFGEV) and lysine 308. Catalysis depends on aspartate 399, which acts as the Proton acceptor. Tyrosine 429 carries the post-translational modification Phosphotyrosine; by autocatalysis. Tyrosine 540 is modified (phosphotyrosine; by CSK).

It belongs to the protein kinase superfamily. Tyr protein kinase family. SRC subfamily. Autophosphorylation at Tyr-429 maintains enzyme activity. In terms of processing, palmitoylation at Cys-3 promotes membrane localization. As to expression, widely expressed.

It localises to the cell membrane. The protein resides in the cytoplasm. Its subcellular location is the cytoskeleton. The protein localises to the microtubule organizing center. It is found in the centrosome. It localises to the cytosol. The protein resides in the cell junction. It carries out the reaction L-tyrosyl-[protein] + ATP = O-phospho-L-tyrosyl-[protein] + ADP + H(+). In terms of biological role, non-receptor protein tyrosine kinase that is involved in the regulation of cell growth and survival, apoptosis, cell-cell adhesion, cytoskeleton remodeling, differentiation, G2/M progression and cytokinesis. Required for convergent extension cell movements during gastrulation, acting with fyna via rhoa. May be required for epiboly to occur, possibly through its effects in calcium signaling. During embryonic development, phosphorylates ptk2.1/fak. The sequence is that of Tyrosine-protein kinase yes (yes1) from Danio rerio (Zebrafish).